The following is a 354-amino-acid chain: Tyrosine recombinase XerH (354 aa).

In terms of domain architecture, Core-binding (CB) spans 48 to 134 (LTKGVKNIDE…AVINFFDFLD (87 aa)). The region spanning 163–346 (KLPEFMSKEE…DNDKLKLAAQ (184 aa)) is the Tyr recombinase domain. Residues arginine 205, lysine 231, histidine 298, arginine 301, and histidine 324 contribute to the active site. The active-site O-(3'-phospho-DNA)-tyrosine intermediate is tyrosine 333.

The protein belongs to the 'phage' integrase family. XerH subfamily.

It localises to the cytoplasm. Its activity is regulated as follows. FtsK is required for efficient recombination. Its function is as follows. Site-specific tyrosine recombinase, which acts by catalyzing the cutting and rejoining of the recombining DNA molecules. Binds to the complete atypical dif motif (difH) site and to both halves separately. This chain is Tyrosine recombinase XerH, found in Campylobacter jejuni subsp. jejuni serotype O:2 (strain ATCC 700819 / NCTC 11168).